The chain runs to 402 residues: Type II NADH:quinone oxidoreductase (402 aa).

Residues 12 to 16 (GAGYA), 39 to 40 (NK), and valine 83 each bind FAD. Glutamate 172 is an active-site residue. FAD-binding positions include aspartate 302, 319–320 (AQ), and lysine 379.

Belongs to the NADH dehydrogenase family. FAD is required as a cofactor.

The protein resides in the cell membrane. It catalyses the reaction a quinone + NADH + H(+) = a quinol + NAD(+). In terms of biological role, alternative, nonproton pumping NADH:quinone oxidoreductase that delivers electrons to the respiratory chain by oxidation of NADH and reduction of quinones, and contributes to the regeneration of NAD(+). This is Type II NADH:quinone oxidoreductase from Staphylococcus saprophyticus subsp. saprophyticus (strain ATCC 15305 / DSM 20229 / NCIMB 8711 / NCTC 7292 / S-41).